The chain runs to 493 residues: NADH-quinone oxidoreductase subunit N 2 (493 aa).

14 consecutive transmembrane segments (helical) span residues 16–36 (IIPAVMLALFGCAILLFDFLI), 45–65 (FLLIFVVLAEAFTGFGLFRQQ), 87–107 (GFAIFFNWIFLVAAVVVAIVS), 119–139 (GEYYSLILFAQCGMYFLATGT), 141–161 (LITLFIGLELMALCFYVMVGF), 176–196 (LLLGAFSSGFLVYGFSVMYGI), 219–239 (VFLALSTTSVGLLFKVSAVPF), 258–278 (LSVASKAASIAFLLRIFLGPL), 285–305 (WEPLLAFIAIITLTIGNLAAI), 313–333 (LLAYSSISHAGYMLLGLVAGN), 340–360 (IAVYVMVYTFMNLGAFLVIIA), 385–405 (AFLMLIFLLSLAGIPPTAGFL), 421–441 (GLAIVATLYVAVAIYYYFKIV), and 464–484 (CALALTGIATLAIGIYPEPFL).

It belongs to the complex I subunit 2 family. As to quaternary structure, NDH-1 is composed of 14 different subunits. Subunits NuoA, H, J, K, L, M, N constitute the membrane sector of the complex.

It is found in the cell inner membrane. The catalysed reaction is a quinone + NADH + 5 H(+)(in) = a quinol + NAD(+) + 4 H(+)(out). NDH-1 shuttles electrons from NADH, via FMN and iron-sulfur (Fe-S) centers, to quinones in the respiratory chain. The immediate electron acceptor for the enzyme in this species is believed to be ubiquinone. Couples the redox reaction to proton translocation (for every two electrons transferred, four hydrogen ions are translocated across the cytoplasmic membrane), and thus conserves the redox energy in a proton gradient. This Solibacter usitatus (strain Ellin6076) protein is NADH-quinone oxidoreductase subunit N 2.